The sequence spans 230 residues: Ion-translocating oxidoreductase complex subunit E (230 aa).

5 helical membrane passes run 39-59 (LGLGIATLLVLVGSNVTVSLV), 69-89 (IPVFVMIIASLVTCVQLLMNA), 93-113 (GLYLSLGIFIPLIVTNCIIIG), 124-144 (VLPAALDGFWMGLGMTSVLVV), and 182-202 (AFLLALLPPGAFIGVGFLIAA).

This sequence belongs to the NqrDE/RnfAE family. As to quaternary structure, the complex is composed of six subunits: RnfA, RnfB, RnfC, RnfD, RnfE and RnfG.

It is found in the cell inner membrane. In terms of biological role, part of a membrane-bound complex that couples electron transfer with translocation of ions across the membrane. The protein is Ion-translocating oxidoreductase complex subunit E of Vibrio cholerae serotype O1 (strain ATCC 39315 / El Tor Inaba N16961).